A 50-amino-acid polypeptide reads, in one-letter code: Large ribosomal subunit protein eL39 (50 aa).

The protein belongs to the eukaryotic ribosomal protein eL39 family.

This is Large ribosomal subunit protein eL39 from Methanoculleus marisnigri (strain ATCC 35101 / DSM 1498 / JR1).